We begin with the raw amino-acid sequence, 405 residues long: MAGRGCGCSPGHLNEDNARFLLLAGLILLYLLGGAAVFSALELAQELQAKQRWEERLANFSRGHNLSREELRGFLRHYEEATRAGIRMDSVRPRWDFTGAFYFVGTVVSTIGFGMTTPATTGGKIFLIFYGLIGCASTILFFNLFLERLITVIACVMRSCHQQQLRRRGAVTQDNMKAPEKGEADSLTGWKPSVYYVMLILCLASVAISCGASALYTTMEGWSYFDSVYFCFVAFSTIGFGDLVSSQNAQYESQGLYRFFNFFLILMGVCCIYSLFNVISILIKQTVNWILRKLDSGCFPPCQRGLLRSRRNVVMPGNIRNRCNISIETDGVMESDTDGRRLSGEMISMKDTNKVSLAILQKQLSEMANGGPHQNSASSRDDEFSGGVGAFAVMNNRLAETSGDR.

Residues Met1–Arg19 are Cytoplasmic-facing. The helical transmembrane segment at Phe20 to Ala40 threads the bilayer. N-linked (GlcNAc...) asparagine glycosylation is found at Asn59 and Asn65. The segment at residues Trp95–Met115 is an intramembrane region (pore-forming). Residues Thr110, Ile111, and Gly112 each contribute to the K(+) site. The selectivity filter 1 stretch occupies residues Thr110–Met115. A helical transmembrane segment spans residues Ile125–Phe145. Residues Leu146–Ser193 are Cytoplasmic-facing. A helical membrane pass occupies residues Val194 to Ala214. The segment at residues Tyr224–Val244 is an intramembrane region (pore-forming). Positions 237, 238, 239, and 240 each coordinate K(+). The interval Thr237–Asp242 is selectivity filter 2. Residues Phe263–Ile283 form a helical membrane-spanning segment. Topologically, residues Lys284–Arg405 are cytoplasmic.

The protein belongs to the two pore domain potassium channel (TC 1.A.1.8) family. In terms of assembly, homodimer. Heterodimer with KCNK12.

It localises to the cell membrane. It catalyses the reaction K(+)(in) = K(+)(out). Its function is as follows. K(+) channel that conducts outward rectifying tonic currents potentiated by purinergic signals. Homo- and heterodimerizes to form functional channels with distinct regulatory and gating properties. Contributes most of K(+) currents at the plasma membrane of resting microglia. Maintains a depolarized membrane potential required for proper ramified microglia morphology and phagocytosis, selectively mediating microglial pruning of presynaptic compartments at hippocampal excitatory synapses. Upon local release of ATP caused by neuronal injury or infection, it is potentiated by P2RY12 and P2RX7 receptor signaling and contributes to ATP-triggered K(+) efflux underlying microglial NLRP3 inflammasome assembly and IL1B release. The chain is Potassium channel subfamily K member 13 from Mus musculus (Mouse).